Reading from the N-terminus, the 542-residue chain is MSTDFDRIYYNQSKVSGRFRLGEGGLGWKASATGGSAAMQNNEPILLTADELASVQWSRGCRGYELKINTKNKGVVQLDGFSQEDFTLLKNDLQRRFNVQLEHKDHSLRGWNWGTTDLTRNELIFSLNGKPTFEIPYSHISNTNLTSKNEVALEFDLQKDGYNPAGDELVEMRLYVPGVVTQEDRHSSPAEDADVDMEKDNKEEKSIAEAFYEELRAKAEIGEVSGDAIISFQDVFFTTPRGRYDIDIYKNSIRLRGKTYEYKLQHRQIQRIFSLPKADDIHHLMVLSIEPPLRQGQTTYPYLVLQFQKDEETEVQLNVEDDEFERLYKDKLKKQYDAKTHVVLSHVLKGLTDTRVVVPGEYKSKHEQCAVSCSFKANEGHLYPLDNAFMFLTKPTLYIPFQDVSSVNISRAGQATTSSRTFDLEVVLRSNRGSTTFANISKEEQQILESFLKSKNVRVKNEEKETQQRLQTALGSDSEDEDVNMGSAAEDDESVDEDFQAESEDDDVAEEFDSDAGVSESETEAADGADTEDRPSKKAKLA.

Residues arginine 458 to alanine 542 are disordered. Composition is skewed to acidic residues over residues aspartate 477–serine 514 and serine 521–aspartate 530.

Belongs to the SSRP1 family. As to quaternary structure, forms a stable heterodimer with SPT16. The SPT16-POB3 dimer weakly associates with multiple molecules of NHP6 to form the FACT complex.

Its subcellular location is the nucleus. It localises to the chromosome. Component of the FACT complex, a general chromatin factor that acts to reorganize nucleosomes. The FACT complex is involved in multiple processes that require DNA as a template such as mRNA elongation, DNA replication and DNA repair. During transcription elongation the FACT complex acts as a histone chaperone that both destabilizes and restores nucleosomal structure. It facilitates the passage of RNA polymerase II and transcription by promoting the dissociation of one histone H2A-H2B dimer from the nucleosome, then subsequently promotes the reestablishment of the nucleosome following the passage of RNA polymerase II. In Eremothecium gossypii (strain ATCC 10895 / CBS 109.51 / FGSC 9923 / NRRL Y-1056) (Yeast), this protein is FACT complex subunit POB3 (POB3).